A 325-amino-acid chain; its full sequence is Small ribosomal subunit protein RACK1 (325 aa).

WD repeat units follow at residues 13-44 (AHTD…ILWH), 61-91 (GHSH…RLWD), 103-133 (GHTK…KLWN), 147-179 (AHSD…KVWN), 191-221 (GHSG…LLWD), 232-261 (DAGS…KIWD), and 291-321 (KKVI…RVWG).

Belongs to the WD repeat G protein beta family. Ribosomal protein RACK1 subfamily.

Its function is as follows. Plays a role in hormone-mediated cell division. The chain is Small ribosomal subunit protein RACK1 (GB1) from Medicago sativa (Alfalfa).